We begin with the raw amino-acid sequence, 357 residues long: MFLEKLNSATSRIKSIEEKLQDINLIKNQKKYSKIIKEYTYLEKINTKKIEYENILNQINDNKTILEKEEQQEMKELIKQELIDLDKKKENLEHEIKILLLPQDENDSKNIIIEIRAGTGGEEAALFANNLYSMYIKYSEKKKWKTEIINFNETELGGFKEIIFEIKGKDVFKKLKYESGVHRVQRIPITESNGRLQTSAATVAVLPNIEETEIDINEKDLRIDVYRSSGAGGQHVNTTDSAVRITHLPTGIVVQCQNERSQHKNKDQAMKILRARLYEFEDSKKQEQRSNNRKQQVGSGDRSERIRTYNFPQNRITDHRANITLYKLEEFMQGELDQLLDPLTIELQEQTLKSNNI.

Q234 is subject to N5-methylglutamine. The tract at residues 282-313 is disordered; that stretch reads DSKKQEQRSNNRKQQVGSGDRSERIRTYNFPQ.

The protein belongs to the prokaryotic/mitochondrial release factor family. Post-translationally, methylated by PrmC. Methylation increases the termination efficiency of RF1.

The protein localises to the cytoplasm. Functionally, peptide chain release factor 1 directs the termination of translation in response to the peptide chain termination codons UAG and UAA. The sequence is that of Peptide chain release factor 1 from Borreliella afzelii (strain PKo) (Borrelia afzelii).